The following is a 1009-amino-acid chain: Epididymis-specific alpha-mannosidase (1009 aa).

The N-terminal stretch at 1–23 is a signal peptide; sequence MGQLCWLPLLAPLLLLRPPGVQS. Residues histidine 36, aspartate 38, and aspartate 151 each coordinate Zn(2+). Aspartate 151 (nucleophile) is an active-site residue. Asparagine 226, asparagine 249, asparagine 294, and asparagine 336 each carry an N-linked (GlcNAc...) asparagine glycan. A Zn(2+)-binding site is contributed by histidine 420. Asparagine 516, asparagine 608, asparagine 670, asparagine 675, asparagine 748, asparagine 808, asparagine 812, and asparagine 890 each carry an N-linked (GlcNAc...) asparagine glycan. A disordered region spans residues 972 to 991; the sequence is GPGRHRGDTTSPSRPPGGPI.

It belongs to the glycosyl hydrolase 38 family. The cofactor is Zn(2+).

It localises to the secreted. The enzyme catalyses Hydrolysis of terminal, non-reducing alpha-D-mannose residues in alpha-D-mannosides.. The sequence is that of Epididymis-specific alpha-mannosidase (MAN2B2) from Homo sapiens (Human).